Consider the following 432-residue polypeptide: Protein RETICULATA, chloroplastic (432 aa).

Residues 1-47 constitute a chloroplast transit peptide; it reads MAGCAMNLQFSSVVKVRNEISSFGICNRDFVFRDLAKAMKVPVLRIR. Residues 109-140 are disordered; sequence GNVGDGFNGSDGNGGGGGGGNGGEGDGEGEDY. A compositionally biased stretch (gly residues) spans 111 to 132; it reads VGDGFNGSDGNGGGGGGGNGGE. The next 2 membrane-spanning stretches (helical) occupy residues 249–269 and 322–342; these read LYVA…GMLA and IMYG…ANLI.

It belongs to the RETICULATA family. As to expression, highly expressed in the vasculature of developing leaf primordia, margins of fully expanded leaves, hydathodes of rosette of cauline leaves, basal region of the lamina, stipules, root tips, stamens and in the abscission zone of the funiculus.

It is found in the plastid. The protein localises to the chloroplast membrane. Functionally, may play a role in leaf development. Required for leaf mesophyll cell division in the early stages of leaf organogenesis. Acts in a developmental pathway that involves PPT1/CUE1 but does not include ASE2/DOV1. The chain is Protein RETICULATA, chloroplastic from Arabidopsis thaliana (Mouse-ear cress).